The sequence spans 93 residues: Cell division topological specificity factor (93 aa).

This sequence belongs to the MinE family.

Its function is as follows. Prevents the cell division inhibition by proteins MinC and MinD at internal division sites while permitting inhibition at polar sites. This ensures cell division at the proper site by restricting the formation of a division septum at the midpoint of the long axis of the cell. In Methylococcus capsulatus (strain ATCC 33009 / NCIMB 11132 / Bath), this protein is Cell division topological specificity factor.